The following is a 644-amino-acid chain: Translation factor GUF1, mitochondrial (644 aa).

The transit peptide at 1–14 (MLRKAFRYLVPVRC) directs the protein to the mitochondrion. The region spanning 46-227 (ERYRNFSIVA…AIVDRIPPPT (182 aa)) is the tr-type G domain. GTP contacts are provided by residues 55–62 (AHVDHGKS), 120–124 (DTPGH), and 174–177 (NKID).

This sequence belongs to the TRAFAC class translation factor GTPase superfamily. Classic translation factor GTPase family. LepA subfamily.

It localises to the mitochondrion inner membrane. The enzyme catalyses GTP + H2O = GDP + phosphate + H(+). Its function is as follows. Promotes mitochondrial protein synthesis. May act as a fidelity factor of the translation reaction, by catalyzing a one-codon backward translocation of tRNAs on improperly translocated ribosomes. Binds to mitochondrial ribosomes in a GTP-dependent manner. This is Translation factor GUF1, mitochondrial from Eremothecium gossypii (strain ATCC 10895 / CBS 109.51 / FGSC 9923 / NRRL Y-1056) (Yeast).